Reading from the N-terminus, the 138-residue chain is Basic phospholipase A2 BP-III (138 aa).

The signal sequence occupies residues 1–16 (MRTLWIMAVLLVGVDG). Intrachain disulfides connect Cys-42–Cys-132, Cys-44–Cys-60, Cys-59–Cys-112, Cys-65–Cys-138, Cys-66–Cys-105, Cys-73–Cys-98, and Cys-91–Cys-103. Ca(2+) contacts are provided by Gly-45 and Gly-47. Residue His-63 is part of the active site. Residue Asp-106 is part of the active site.

The protein belongs to the phospholipase A2 family. Group II subfamily. K49 sub-subfamily. Requires Ca(2+) as cofactor. As to expression, expressed by the venom gland.

The protein localises to the secreted. The enzyme catalyses a 1,2-diacyl-sn-glycero-3-phosphocholine + H2O = a 1-acyl-sn-glycero-3-phosphocholine + a fatty acid + H(+). In terms of biological role, snake venom phospholipase A2 (PLA2) that has low phospholipase A2 activity. Shows anticoagulant activities, strong myolytic activity, infiltration of polymorphonuclear cells, and edema in stromal tissues. Induces cell death of Jurkat cells in a concentration dependent manner. PLA2 catalyzes the calcium-dependent hydrolysis of the 2-acyl groups in 3-sn-phosphoglycerides. In Protobothrops flavoviridis (Habu), this protein is Basic phospholipase A2 BP-III.